Here is a 490-residue protein sequence, read N- to C-terminus: Aspartyl/glutamyl-tRNA(Asn/Gln) amidotransferase subunit B (490 aa).

Belongs to the GatB/GatE family. GatB subfamily. As to quaternary structure, heterotrimer of A, B and C subunits.

It catalyses the reaction L-glutamyl-tRNA(Gln) + L-glutamine + ATP + H2O = L-glutaminyl-tRNA(Gln) + L-glutamate + ADP + phosphate + H(+). The catalysed reaction is L-aspartyl-tRNA(Asn) + L-glutamine + ATP + H2O = L-asparaginyl-tRNA(Asn) + L-glutamate + ADP + phosphate + 2 H(+). Functionally, allows the formation of correctly charged Asn-tRNA(Asn) or Gln-tRNA(Gln) through the transamidation of misacylated Asp-tRNA(Asn) or Glu-tRNA(Gln) in organisms which lack either or both of asparaginyl-tRNA or glutaminyl-tRNA synthetases. The reaction takes place in the presence of glutamine and ATP through an activated phospho-Asp-tRNA(Asn) or phospho-Glu-tRNA(Gln). In Symbiobacterium thermophilum (strain DSM 24528 / JCM 14929 / IAM 14863 / T), this protein is Aspartyl/glutamyl-tRNA(Asn/Gln) amidotransferase subunit B.